The following is a 191-amino-acid chain: CASP-like protein 2U4 (191 aa).

The Cytoplasmic segment spans residues 1 to 25 (MGAYDGAEAPRAAPASTAANSRPSR). A helical transmembrane segment spans residues 26–46 (LLLLHSLLLRLVAVVLSILVI). At 47 to 68 (AVMVHAKQRVMIFKAEWDNSKA) the chain is on the extracellular side. A helical transmembrane segment spans residues 69-89 (FVALVTISAICLGYSFLQFIL). Over 90–114 (SAFHLCSKSWKSPTKCWAWMNFIAD) the chain is Cytoplasmic. A helical transmembrane segment spans residues 115-135 (QILTYAMLGAAAAAAELAYIA). Over 136-157 (KNGSSRAQWQPICSTFNTFCTR) the chain is Extracellular. Asparagine 137 carries an N-linked (GlcNAc...) asparagine glycan. A helical membrane pass occupies residues 158-178 (AGASIILSFIAVLALANSSAI). Topologically, residues 179 to 191 (SAYHLFRRPSSSV) are cytoplasmic.

The protein belongs to the Casparian strip membrane proteins (CASP) family. As to quaternary structure, homodimer and heterodimers.

The protein resides in the cell membrane. The protein is CASP-like protein 2U4 of Selaginella moellendorffii (Spikemoss).